A 723-amino-acid polypeptide reads, in one-letter code: Preterminal protein (723 aa).

The short motif at 453-462 (RLPMRRRRRR) is the Nuclear localization signal element. Positions 457–492 (RRRRRRAPPPPPMSEELSEPEVEAFPPASPPRRSFE) are disordered. At Ser-651 the chain carries O-(5'-phospho-DNA)-serine.

The protein belongs to the adenoviridae terminal protein family. Heterodimer with the polymerase; this heterodimer binds to bp 9 to 18 of the genome. Interacts with host POU2F1; POU2F1 binds to the auxiliary sequences in the inverted terminal repeats and tethers the pTP-POL heterodimer to the origin DNA thereby participating in the assembly of the pre-initiation complex (POL-TP-DBP-NFIA-POU2F1). Preterminal protein is used to replicate viral genome, upon genomic encapsidation it is processed first into iTP and finally into TP by adenovirus protease.

It localises to the host nucleus matrix. Functionally, protein covalently bound to the viral DNA that acts as a primer for viral genomic replication by DNA strand displacement. Assembles on the viral origin of replication in an initiation complex with viral polymerase, DBP, host NFIA and host POU2F1/OCT1. During initiation, the polymerase covalently couples the first dCTP with Ser-580 of pTP. The terminal protein stimulates the template activity over 20 fold compared to protein-free templates. Neo-synthesized viral genomes are linked to two preterminal proteins, one for each 5' end. These new genomes are encapsidated in the nucleus, and during capsid maturation by viral protease, preterminal protein is first cleaved into intermediary (iTP), then into mature TP. May play a role in host nuclear matrix localization of genomic DNA. The sequence is that of Preterminal protein from Canis lupus familiaris (Dog).